A 134-amino-acid chain; its full sequence is Small ribosomal subunit protein uS12 (134 aa).

3-methylthioaspartic acid is present on Asp89. The tract at residues 109–134 (KRNVSRSKYGAKKGKAGAAPTTGKKK) is disordered. The segment covering 111-123 (NVSRSKYGAKKGK) has biased composition (basic residues). Residues 124–134 (AGAAPTTGKKK) are compositionally biased toward low complexity.

The protein belongs to the universal ribosomal protein uS12 family. As to quaternary structure, part of the 30S ribosomal subunit. Contacts proteins S8 and S17. May interact with IF1 in the 30S initiation complex.

Its function is as follows. With S4 and S5 plays an important role in translational accuracy. In terms of biological role, interacts with and stabilizes bases of the 16S rRNA that are involved in tRNA selection in the A site and with the mRNA backbone. Located at the interface of the 30S and 50S subunits, it traverses the body of the 30S subunit contacting proteins on the other side and probably holding the rRNA structure together. The combined cluster of proteins S8, S12 and S17 appears to hold together the shoulder and platform of the 30S subunit. This is Small ribosomal subunit protein uS12 from Wolinella succinogenes (strain ATCC 29543 / DSM 1740 / CCUG 13145 / JCM 31913 / LMG 7466 / NCTC 11488 / FDC 602W) (Vibrio succinogenes).